The chain runs to 327 residues: Peroxidase 21 (327 aa).

A signal peptide spans 1-28; sequence MANAKPFCLLGFFCLLLQLFSIFHIGNG. 4 disulfides stabilise this stretch: cysteine 39/cysteine 118, cysteine 72/cysteine 77, cysteine 124/cysteine 323, and cysteine 204/cysteine 231. Catalysis depends on histidine 70, which acts as the Proton acceptor. Residues aspartate 71, valine 74, aspartate 78, and serine 80 each contribute to the Ca(2+) site. Position 167 (proline 167) interacts with substrate. The N-linked (GlcNAc...) asparagine glycan is linked to asparagine 170. Residue histidine 197 coordinates heme b. A Ca(2+)-binding site is contributed by serine 198. 3 residues coordinate Ca(2+): aspartate 247, threonine 250, and aspartate 255.

The protein belongs to the peroxidase family. Classical plant (class III) peroxidase subfamily. Requires heme b as cofactor. The cofactor is Ca(2+). As to expression, preferentially expressed in roots and leaves, slightly in stems.

The catalysed reaction is 2 a phenolic donor + H2O2 = 2 a phenolic radical donor + 2 H2O. Removal of H(2)O(2), oxidation of toxic reductants, biosynthesis and degradation of lignin, suberization, auxin catabolism, response to environmental stresses such as wounding, pathogen attack and oxidative stress. These functions might be dependent on each isozyme/isoform in each plant tissue. Functionally, might function as heat shock-like defense protein. May be implicated in the systemic acquired resistance response. The sequence is that of Peroxidase 21 (PER21) from Arabidopsis thaliana (Mouse-ear cress).